An 88-amino-acid chain; its full sequence is Small ribosomal subunit protein uS15 (88 aa).

Belongs to the universal ribosomal protein uS15 family. As to quaternary structure, part of the 30S ribosomal subunit. Forms a bridge to the 50S subunit in the 70S ribosome, contacting the 23S rRNA.

In terms of biological role, one of the primary rRNA binding proteins, it binds directly to 16S rRNA where it helps nucleate assembly of the platform of the 30S subunit by binding and bridging several RNA helices of the 16S rRNA. Forms an intersubunit bridge (bridge B4) with the 23S rRNA of the 50S subunit in the ribosome. The chain is Small ribosomal subunit protein uS15 from Mycoplasma mobile (strain ATCC 43663 / 163K / NCTC 11711) (Mesomycoplasma mobile).